A 348-amino-acid polypeptide reads, in one-letter code: Ileal sodium/bile acid cotransporter (348 aa).

Over Met-1–Ala-28 the chain is Extracellular. Residues Asn-3 and Asn-10 are each glycosylated (N-linked (GlcNAc...) asparagine). A helical membrane pass occupies residues Ile-29 to Met-49. Over Gly-50 to Ser-87 the chain is Cytoplasmic. The helical transmembrane segment at Val-88–Gly-108 threads the bilayer. Residues Gly-109–Ser-126 lie on the Extracellular side of the membrane. The chain crosses the membrane as a helical span at residues Val-127–Val-147. At Tyr-148 to Thr-157 the chain is on the cytoplasmic side. A helical transmembrane segment spans residues Ile-158–Phe-178. Over Gly-179 to Lys-195 the chain is Extracellular. The chain crosses the membrane as a helical span at residues Ile-196–Tyr-216. Residues Gln-217–Pro-224 lie on the Cytoplasmic side of the membrane. A helical membrane pass occupies residues Lys-225 to Ala-245. Residues Arg-246–Asn-284 are Extracellular-facing. A helical membrane pass occupies residues Leu-285–Leu-305. At Gly-306–Lys-348 the chain is on the cytoplasmic side. A disordered region spans residues Asn-328 to Lys-348. Ser-335 is subject to Phosphoserine.

Belongs to the bile acid:sodium symporter (BASS) (TC 2.A.28) family. As to quaternary structure, monomer and homodimer. As to expression, expressed in ileum.

It is found in the membrane. It carries out the reaction taurocholate(out) + 2 Na(+)(out) = taurocholate(in) + 2 Na(+)(in). The catalysed reaction is cholate(out) + 2 Na(+)(out) = cholate(in) + 2 Na(+)(in). The enzyme catalyses taurochenodeoxycholate(out) + 2 Na(+)(out) = taurochenodeoxycholate(in) + 2 Na(+)(in). It catalyses the reaction tauroursodeoxycholate(out) + 2 Na(+)(out) = tauroursodeoxycholate(in) + 2 Na(+)(in). It carries out the reaction glycocholate(out) + 2 Na(+)(out) = glycocholate(in) + 2 Na(+)(in). The catalysed reaction is tauronorcholate(out) + 2 Na(+)(out) = tauronorcholate(in) + 2 Na(+)(in). The enzyme catalyses tauroallocholate(out) + 2 Na(+)(out) = tauroallocholate(in) + 2 Na(+)(in). It catalyses the reaction taurodeoxycholate(out) + 2 Na(+)(out) = taurodeoxycholate(in) + 2 Na(+)(in). It carries out the reaction tauro-beta-muricholate(out) + 2 Na(+)(out) = tauro-beta-muricholate(in) + 2 Na(+)(in). Functionally, plays a critical role in the sodium-dependent reabsorption of bile acids from the lumen of the small intestine. Transports various bile acids, unconjugated or conjugated, such as cholate and taurocholate. Also responsible for bile acid transport in the renal proximal tubules, a salvage mechanism that helps conserve bile acids. Works collaboratively with the Na(+)-taurocholate cotransporting polypeptide (NTCP), the organic solute transporter (OST), and the bile salt export pump (BSEP), to ensure efficacious biological recycling of bile acids during enterohepatic circulation. This chain is Ileal sodium/bile acid cotransporter (Slc10a2), found in Mus musculus (Mouse).